The primary structure comprises 437 residues: Purple acid phosphatase 18 (437 aa).

The signal sequence occupies residues 1 to 23; sequence MEKWGILLLVTLSVSIIFTSAAA. Positions 148, 175, and 178 each coordinate Fe cation. Residue Asp175 coordinates Zn(2+). Zn(2+) contacts are provided by Asn208 and His291. A substrate-binding site is contributed by Asn208. His301 (proton donor) is an active-site residue. His328 contributes to the Zn(2+) binding site. A substrate-binding site is contributed by 328 to 330; it reads HVH. Residue His330 coordinates Fe cation. An N-linked (GlcNAc...) asparagine glycan is attached at Asn390.

This sequence belongs to the metallophosphoesterase superfamily. Purple acid phosphatase family. As to quaternary structure, homodimer. Fe cation is required as a cofactor. The cofactor is Zn(2+). As to expression, expressed in roots, stems, leaves, flowers and siliques.

The protein localises to the secreted. It catalyses the reaction a phosphate monoester + H2O = an alcohol + phosphate. The sequence is that of Purple acid phosphatase 18 (PAP18) from Arabidopsis thaliana (Mouse-ear cress).